We begin with the raw amino-acid sequence, 342 residues long: Elongation factor Ts (342 aa).

The interval 80–83 (TDFV) is involved in Mg(2+) ion dislocation from EF-Tu.

This sequence belongs to the EF-Ts family.

Its subcellular location is the cytoplasm. Associates with the EF-Tu.GDP complex and induces the exchange of GDP to GTP. It remains bound to the aminoacyl-tRNA.EF-Tu.GTP complex up to the GTP hydrolysis stage on the ribosome. This chain is Elongation factor Ts, found in Lactobacillus delbrueckii subsp. bulgaricus (strain ATCC 11842 / DSM 20081 / BCRC 10696 / JCM 1002 / NBRC 13953 / NCIMB 11778 / NCTC 12712 / WDCM 00102 / Lb 14).